The primary structure comprises 399 residues: Argininosuccinate synthase (399 aa).

An ATP-binding site is contributed by 8 to 16 (AYSGGLDTS). Tyrosine 87 serves as a coordination point for L-citrulline. Residue glycine 117 coordinates ATP. L-aspartate contacts are provided by threonine 119, asparagine 123, and aspartate 124. An L-citrulline-binding site is contributed by asparagine 123. Residues arginine 127, serine 175, glutamate 260, and tyrosine 272 each contribute to the L-citrulline site.

Belongs to the argininosuccinate synthase family. Type 1 subfamily. As to quaternary structure, homotetramer.

It is found in the cytoplasm. The enzyme catalyses L-citrulline + L-aspartate + ATP = 2-(N(omega)-L-arginino)succinate + AMP + diphosphate + H(+). The protein operates within amino-acid biosynthesis; L-arginine biosynthesis; L-arginine from L-ornithine and carbamoyl phosphate: step 2/3. The polypeptide is Argininosuccinate synthase (Mycolicibacterium smegmatis (strain ATCC 700084 / mc(2)155) (Mycobacterium smegmatis)).